The sequence spans 503 residues: Probable cytosol aminopeptidase (503 aa).

Residues K268 and D273 each coordinate Mn(2+). K280 is a catalytic residue. Mn(2+) is bound by residues D291, D350, and E352. R354 is an active-site residue.

Belongs to the peptidase M17 family. Mn(2+) serves as cofactor.

It localises to the cytoplasm. The catalysed reaction is Release of an N-terminal amino acid, Xaa-|-Yaa-, in which Xaa is preferably Leu, but may be other amino acids including Pro although not Arg or Lys, and Yaa may be Pro. Amino acid amides and methyl esters are also readily hydrolyzed, but rates on arylamides are exceedingly low.. It catalyses the reaction Release of an N-terminal amino acid, preferentially leucine, but not glutamic or aspartic acids.. Functionally, presumably involved in the processing and regular turnover of intracellular proteins. Catalyzes the removal of unsubstituted N-terminal amino acids from various peptides. This Methylobacterium radiotolerans (strain ATCC 27329 / DSM 1819 / JCM 2831 / NBRC 15690 / NCIMB 10815 / 0-1) protein is Probable cytosol aminopeptidase.